A 427-amino-acid polypeptide reads, in one-letter code: Serine--tRNA ligase 2 (427 aa).

Over residues 35–53 (RRRSEAQAEVTRLRTELNR) the composition is skewed to basic and acidic residues. Residues 35 to 72 (RRRSEAQAEVTRLRTELNRTSRARGRSGPPSEEEKEAA) are disordered. 230–232 (TAE) lines the L-serine pocket. An ATP-binding site is contributed by 261 to 263 (RAE). E284 provides a ligand contact to L-serine. 348–351 (EISS) is an ATP binding site. L-serine is bound at residue S383.

This sequence belongs to the class-II aminoacyl-tRNA synthetase family. Type-1 seryl-tRNA synthetase subfamily. Homodimer. The tRNA molecule binds across the dimer.

The protein localises to the cytoplasm. It carries out the reaction tRNA(Ser) + L-serine + ATP = L-seryl-tRNA(Ser) + AMP + diphosphate + H(+). It catalyses the reaction tRNA(Sec) + L-serine + ATP = L-seryl-tRNA(Sec) + AMP + diphosphate + H(+). Its pathway is aminoacyl-tRNA biosynthesis; selenocysteinyl-tRNA(Sec) biosynthesis; L-seryl-tRNA(Sec) from L-serine and tRNA(Sec): step 1/1. Functionally, catalyzes the attachment of serine to tRNA(Ser). Is also able to aminoacylate tRNA(Sec) with serine, to form the misacylated tRNA L-seryl-tRNA(Sec), which will be further converted into selenocysteinyl-tRNA(Sec). The chain is Serine--tRNA ligase 2 from Streptomyces avermitilis (strain ATCC 31267 / DSM 46492 / JCM 5070 / NBRC 14893 / NCIMB 12804 / NRRL 8165 / MA-4680).